The primary structure comprises 103 residues: Potassium voltage-gated channel subfamily E member 3 (103 aa).

3 N-linked (GlcNAc...) asparagine glycosylation sites follow: asparagine 5, asparagine 22, and asparagine 41. Positions 30–52 (LCRPGPGPGPDNQTEDRRASLPG) are disordered. Residues 57 to 77 (SYMYILFVMFLFAVTVGSLIL) traverse the membrane as a helical segment. The segment at 68–79 (FAVTVGSLILGY) is interaction with KCNQ1. Residues 78–103 (GYTRSRKVDKRSDPYHVYIKNRVSMI) are Cytoplasmic-facing.

It belongs to the potassium channel KCNE family. In terms of assembly, interacts with KCNB1. Interacts with KCNC2. Associates with KCNC4/Kv3.4. Interacts with KCNQ1; associates with a KCNQ1:KCNE3 stoichiometry of 4:4; produces a current with nearly instantaneous activation with a linear current-voltage relationship and alters membrane raft localization; affects KCNQ1 structure and gating properties.

The protein localises to the cell membrane. The protein resides in the cytoplasm. It localises to the perikaryon. Its subcellular location is the cell projection. It is found in the dendrite. The protein localises to the membrane raft. Its function is as follows. Ancillary protein that functions as a regulatory subunit of the voltage-gated potassium (Kv) channel complex composed of pore-forming and potassium-conducting alpha subunits and of regulatory beta subunits. KCNE3 beta subunit modulates the gating kinetics and enhances stability of the channel complex. Alters the gating of the delayed rectifier Kv channel containing KCNB1 alpha subunit. Associates with KCNC4/Kv3.4 alpha subunit to form the subthreshold Kv channel in skeletal muscle and to establish the resting membrane potential (RMP) in muscle cells. Association with KCNQ1/KCLQT1 alpha subunit may form the intestinal cAMP-stimulated potassium channel involved in chloride secretion that produces a current with nearly instantaneous activation with a linear current-voltage relationship. The chain is Potassium voltage-gated channel subfamily E member 3 from Mus musculus (Mouse).